Consider the following 43-residue polypeptide: Protein PsbN (43 aa).

Residues 7–24 (VAISISRSLVSFTGYALY) form a helical membrane-spanning segment.

The protein belongs to the PsbN family.

The protein resides in the plastid. It is found in the chloroplast thylakoid membrane. Its function is as follows. May play a role in photosystem I and II biogenesis. The sequence is that of Protein PsbN from Ginkgo biloba (Ginkgo).